The sequence spans 394 residues: Putative FNIP repeat-containing protein R636 (394 aa).

FNIP repeat units lie at residues 126–167 (FNKS…FSVY), 168–207 (FDQP…LYFG), and 210–250 (FNQP…IFEA).

The polypeptide is Putative FNIP repeat-containing protein R636 (Acanthamoeba polyphaga mimivirus (APMV)).